An 804-amino-acid polypeptide reads, in one-letter code: Probable phosphoketolase (804 aa).

Belongs to the XFP family. Requires thiamine diphosphate as cofactor.

The sequence is that of Probable phosphoketolase from Mycobacterium avium (strain 104).